We begin with the raw amino-acid sequence, 642 residues long: Threonine--tRNA ligase (642 aa).

The TGS domain occupies 1–61 (MPVITLPDGS…ENDAQLSIIT (61 aa)). Positions 243–534 (DHRKIGKQLD…LTEEFAGFFP (292 aa)) are catalytic. K286 carries the N6-acetyllysine modification. The Zn(2+) site is built by C334, H385, and H511.

It belongs to the class-II aminoacyl-tRNA synthetase family. In terms of assembly, homodimer. It depends on Zn(2+) as a cofactor.

The protein resides in the cytoplasm. It carries out the reaction tRNA(Thr) + L-threonine + ATP = L-threonyl-tRNA(Thr) + AMP + diphosphate + H(+). Catalyzes the attachment of threonine to tRNA(Thr) in a two-step reaction: L-threonine is first activated by ATP to form Thr-AMP and then transferred to the acceptor end of tRNA(Thr). Also edits incorrectly charged L-seryl-tRNA(Thr). This Shigella boydii serotype 18 (strain CDC 3083-94 / BS512) protein is Threonine--tRNA ligase.